We begin with the raw amino-acid sequence, 371 residues long: MQSTDLKRLLIPSLLGLAIVTGSAQAAAPLRPPQGYYAPVDKFKSGDNSEGCDAMPAPYTGALQFRSKYEGSDKARATLNVQSEQAFRDTTADITKIERGTSKRVMQFMRDGRPEQLDCTLAWLSAWAQADALMSKDFNHTGKSMRKWALGSMASAYLRLKFSDSHPLATHQEQAQKIEAWFSKMADQVVSDWDNLPLDKTNNHSYWAAWSVMATAVATNRRDLFDWAVKEYKVGANQVDADGFLPNELKRQQRALAYHNYALPPLAMIASFAQVNGVDLRQENHEALKRLGERVLAGVKDPDTFEKKNGKQQDMTDLKVDSKFAWLEPYCSLYTCAPETLERKHKMQPFKTFRLGGDLTKVYDPAHEKGS.

The first 26 residues, 1 to 26 (MQSTDLKRLLIPSLLGLAIVTGSAQA), serve as a signal peptide directing secretion. Substrate-binding positions include 67–68 (SK), 140–141 (HT), and tyrosine 258.

The protein belongs to the polysaccharide lyase 5 family.

It localises to the periplasm. It carries out the reaction Eliminative cleavage of alginate to give oligosaccharides with 4-deoxy-alpha-L-erythro-hex-4-enuronosyl groups at their non-reducing ends and beta-D-mannuronate at their reducing end.. Functionally, catalyzes the depolymerization of alginate by cleaving the beta-1,4 glycosidic bond between two adjacent sugar residues via a beta-elimination mechanism. May serve to degrade mislocalized alginate that is trapped in the periplasmic space. The protein is Alginate lyase of Pseudomonas fluorescens (strain ATCC BAA-477 / NRRL B-23932 / Pf-5).